Here is a 343-residue protein sequence, read N- to C-terminus: GTPase Obg (343 aa).

In terms of domain architecture, Obg spans 1 to 159 (MKFVDSASIF…LQLDMELKLM (159 aa)). The disordered stretch occupies residues 121–144 (GHGGRGNQHFATSTNQAPRRSEPG). Positions 129 to 138 (HFATSTNQAP) are enriched in polar residues. One can recognise an OBG-type G domain in the interval 160–323 (ADVGLVGFPN…LKDELWREVS (164 aa)). GTP is bound by residues 166 to 173 (GFPNAGKS), 191 to 195 (FTTLV), 213 to 216 (DIPG), 280 to 283 (TKMD), and 304 to 306 (SSV). The Mg(2+) site is built by Ser173 and Thr193. The tract at residues 322–343 (VSMRDRPEESSDPEGEGDGGTP) is disordered. The segment covering 331 to 343 (SSDPEGEGDGGTP) has biased composition (acidic residues).

The protein belongs to the TRAFAC class OBG-HflX-like GTPase superfamily. OBG GTPase family. As to quaternary structure, monomer. It depends on Mg(2+) as a cofactor.

The protein localises to the cytoplasm. Its function is as follows. An essential GTPase which binds GTP, GDP and possibly (p)ppGpp with moderate affinity, with high nucleotide exchange rates and a fairly low GTP hydrolysis rate. Plays a role in control of the cell cycle, stress response, ribosome biogenesis and in those bacteria that undergo differentiation, in morphogenesis control. In Chlorobium luteolum (strain DSM 273 / BCRC 81028 / 2530) (Pelodictyon luteolum), this protein is GTPase Obg.